The following is a 216-amino-acid chain: DDB1- and CUL4-associated factor 16 (216 aa).

The disordered stretch occupies residues 1–42 (MGPRNPSPDHLSESESEEEENISYLNESSGEEWDSSEEEDSM). Over residues 29-41 (SGEEWDSSEEEDS) the composition is skewed to acidic residues. K61 is subject to N6-acetyllysine.

As to quaternary structure, interacts with DDB1 and CUL4A.

The protein resides in the nucleus. The protein operates within protein modification; protein ubiquitination. Its function is as follows. Functions as a substrate recognition component for CUL4-DDB1 E3 ubiquitin-protein ligase complex, which mediates ubiquitination and proteasome-dependent degradation of nuclear proteins. The polypeptide is DDB1- and CUL4-associated factor 16 (Homo sapiens (Human)).